The primary structure comprises 93 residues: Pyrimidine/purine nucleoside phosphorylase (93 aa).

Belongs to the nucleoside phosphorylase PpnP family.

The enzyme catalyses a purine D-ribonucleoside + phosphate = a purine nucleobase + alpha-D-ribose 1-phosphate. It catalyses the reaction adenosine + phosphate = alpha-D-ribose 1-phosphate + adenine. It carries out the reaction cytidine + phosphate = cytosine + alpha-D-ribose 1-phosphate. The catalysed reaction is guanosine + phosphate = alpha-D-ribose 1-phosphate + guanine. The enzyme catalyses inosine + phosphate = alpha-D-ribose 1-phosphate + hypoxanthine. It catalyses the reaction thymidine + phosphate = 2-deoxy-alpha-D-ribose 1-phosphate + thymine. It carries out the reaction uridine + phosphate = alpha-D-ribose 1-phosphate + uracil. The catalysed reaction is xanthosine + phosphate = alpha-D-ribose 1-phosphate + xanthine. In terms of biological role, catalyzes the phosphorolysis of diverse nucleosides, yielding D-ribose 1-phosphate and the respective free bases. Can use uridine, adenosine, guanosine, cytidine, thymidine, inosine and xanthosine as substrates. Also catalyzes the reverse reactions. In Shewanella halifaxensis (strain HAW-EB4), this protein is Pyrimidine/purine nucleoside phosphorylase.